Reading from the N-terminus, the 230-residue chain is N-(5'-phosphoribosyl)anthranilate isomerase (230 aa).

Belongs to the TrpF family.

The catalysed reaction is N-(5-phospho-beta-D-ribosyl)anthranilate = 1-(2-carboxyphenylamino)-1-deoxy-D-ribulose 5-phosphate. It functions in the pathway amino-acid biosynthesis; L-tryptophan biosynthesis; L-tryptophan from chorismate: step 3/5. The chain is N-(5'-phosphoribosyl)anthranilate isomerase from Trichodesmium erythraeum (strain IMS101).